Here is a 367-residue protein sequence, read N- to C-terminus: Phosphoribosylaminoimidazole-succinocarboxamide synthase (367 aa).

It belongs to the SAICAR synthetase family.

It catalyses the reaction 5-amino-1-(5-phospho-D-ribosyl)imidazole-4-carboxylate + L-aspartate + ATP = (2S)-2-[5-amino-1-(5-phospho-beta-D-ribosyl)imidazole-4-carboxamido]succinate + ADP + phosphate + 2 H(+). It participates in purine metabolism; IMP biosynthesis via de novo pathway; 5-amino-1-(5-phospho-D-ribosyl)imidazole-4-carboxamide from 5-amino-1-(5-phospho-D-ribosyl)imidazole-4-carboxylate: step 1/2. The polypeptide is Phosphoribosylaminoimidazole-succinocarboxamide synthase (Shewanella sp. (strain MR-7)).